A 266-amino-acid chain; its full sequence is MAIMQINFYSKMLKKNTTILAILPVDKPDKKFQKDVDSENLKTLYLLHGYAGNYMDWLCGARIVELSMRYNVAVFLPSGENSFYLDDEEKEEYFGEFVGNEIIEFTRSVFPIPQKREKTFIGGLSMGGYGALRNGLKYNKNFVGIIALSSALIIHKIAGIPKDYRNAYASYNYYRRVFGDLNSLIGSDKDINALVTKLKQEKGSIPKIYMACGRDDFLVQENRDLFNFLKNEGIDVVYEEDEGGHDWDFWNKYIANAFEWMSKVSD.

The sequence is that of Acetyl esterase (xynC) from Caldicellulosiruptor saccharolyticus (Caldocellum saccharolyticum).